We begin with the raw amino-acid sequence, 86 residues long: Cell division topological specificity factor (86 aa).

Belongs to the MinE family.

Functionally, prevents the cell division inhibition by proteins MinC and MinD at internal division sites while permitting inhibition at polar sites. This ensures cell division at the proper site by restricting the formation of a division septum at the midpoint of the long axis of the cell. In Stenotrophomonas maltophilia (strain K279a), this protein is Cell division topological specificity factor.